Here is a 367-residue protein sequence, read N- to C-terminus: Aspartate-semialdehyde dehydrogenase (367 aa).

Residues 10 to 13 (RGMV), 37 to 38 (TS), and Gln-73 each bind NADP(+). Arg-102 lines the phosphate pocket. The Acyl-thioester intermediate role is filled by Cys-135. The residue at position 135 (Cys-135) is an S-cysteinyl cysteine; in inhibited form. Residue Gln-162 participates in substrate binding. Residues 165–169 (SGGGA), Arg-173, and Pro-193 contribute to the NADP(+) site. Position 241 (Glu-241) interacts with substrate. Position 244 (Lys-244) interacts with phosphate. Substrate is bound at residue Arg-267. The active-site Proton acceptor is the His-274. An NADP(+)-binding site is contributed by Gln-350.

It belongs to the aspartate-semialdehyde dehydrogenase family. Homodimer.

The catalysed reaction is L-aspartate 4-semialdehyde + phosphate + NADP(+) = 4-phospho-L-aspartate + NADPH + H(+). It functions in the pathway amino-acid biosynthesis; L-lysine biosynthesis via DAP pathway; (S)-tetrahydrodipicolinate from L-aspartate: step 2/4. Its pathway is amino-acid biosynthesis; L-methionine biosynthesis via de novo pathway; L-homoserine from L-aspartate: step 2/3. The protein operates within amino-acid biosynthesis; L-threonine biosynthesis; L-threonine from L-aspartate: step 2/5. Its activity is regulated as follows. Is inhibited by L- and D-cystine, and by other cystine derivatives, via the formation of a covalently bound cysteine at the active site Cys-135. Catalyzes the NADPH-dependent formation of L-aspartate-semialdehyde (L-ASA) by the reductive dephosphorylation of L-aspartyl-4-phosphate. The chain is Aspartate-semialdehyde dehydrogenase from Escherichia coli (strain K12).